Reading from the N-terminus, the 423-residue chain is Probable sucrose-phosphatase 1 (423 aa).

It belongs to the sucrose phosphatase family. In terms of assembly, homodimer. Requires Mg(2+) as cofactor.

It carries out the reaction sucrose 6(F)-phosphate + H2O = sucrose + phosphate. Its pathway is glycan biosynthesis; sucrose biosynthesis; sucrose from D-fructose 6-phosphate and UDP-alpha-D-glucose: step 2/2. Catalyzes the final step of sucrose synthesis. This is Probable sucrose-phosphatase 1 (SPP1) from Arabidopsis thaliana (Mouse-ear cress).